The following is a 269-amino-acid chain: Tryptophan synthase alpha chain (269 aa).

Catalysis depends on proton acceptor residues glutamate 49 and aspartate 60.

Belongs to the TrpA family. In terms of assembly, tetramer of two alpha and two beta chains.

The enzyme catalyses (1S,2R)-1-C-(indol-3-yl)glycerol 3-phosphate + L-serine = D-glyceraldehyde 3-phosphate + L-tryptophan + H2O. It functions in the pathway amino-acid biosynthesis; L-tryptophan biosynthesis; L-tryptophan from chorismate: step 5/5. The alpha subunit is responsible for the aldol cleavage of indoleglycerol phosphate to indole and glyceraldehyde 3-phosphate. This Pseudomonas putida (strain ATCC 47054 / DSM 6125 / CFBP 8728 / NCIMB 11950 / KT2440) protein is Tryptophan synthase alpha chain.